The sequence spans 341 residues: Zinc finger protein ZIC 4 (341 aa).

The segment at 36 to 66 (HHGPQLAASSNPSVLPGLHEQPPQASHSRPL) is disordered. A C2H2-type 1; atypical zinc finger spans residues 135–169 (LICKWLGDDSPMSPRPCSKTFSTMHELVTHVTVEH). A C2H2-type 2; atypical zinc finger spans residues 178-205 (HICFWEECPRQGKPFKAKYKLVNHIRVH). 3 consecutive C2H2-type zinc fingers follow at residues 211–235 (FPCP…KRTH), 241–265 (FRCE…SHVH), and 271–295 (YMCK…MKVH). The tract at residues 289-309 (RKHMKVHGRSPPPSSGYDSAI) is disordered.

Belongs to the GLI C2H2-type zinc-finger protein family. Exclusively expressed in the cerebellum.

Its subcellular location is the nucleus. In terms of biological role, binds to DNA. In Mus musculus (Mouse), this protein is Zinc finger protein ZIC 4 (Zic4).